The chain runs to 475 residues: Ribulose bisphosphate carboxylase large chain (475 aa).

Lys14 is subject to N6,N6,N6-trimethyllysine. Substrate-binding residues include Asn123 and Thr173. Lys175 acts as the Proton acceptor in catalysis. Substrate is bound at residue Lys177. Residues Lys201, Asp203, and Glu204 each coordinate Mg(2+). At Lys201 the chain carries N6-carboxylysine. The active-site Proton acceptor is the His294. Positions 295, 327, and 379 each coordinate substrate.

It belongs to the RuBisCO large chain family. Type I subfamily. Heterohexadecamer of 8 large chains and 8 small chains; disulfide-linked. The disulfide link is formed within the large subunit homodimers. It depends on Mg(2+) as a cofactor. The disulfide bond which can form in the large chain dimeric partners within the hexadecamer appears to be associated with oxidative stress and protein turnover.

It is found in the plastid. It localises to the chloroplast. The catalysed reaction is 2 (2R)-3-phosphoglycerate + 2 H(+) = D-ribulose 1,5-bisphosphate + CO2 + H2O. It catalyses the reaction D-ribulose 1,5-bisphosphate + O2 = 2-phosphoglycolate + (2R)-3-phosphoglycerate + 2 H(+). Its function is as follows. RuBisCO catalyzes two reactions: the carboxylation of D-ribulose 1,5-bisphosphate, the primary event in carbon dioxide fixation, as well as the oxidative fragmentation of the pentose substrate in the photorespiration process. Both reactions occur simultaneously and in competition at the same active site. The polypeptide is Ribulose bisphosphate carboxylase large chain (Actinidia chinensis (Kiwi)).